Here is a 187-residue protein sequence, read N- to C-terminus: Ribosome hibernation promotion factor (187 aa).

It belongs to the HPF/YfiA ribosome-associated protein family. Long HPF subfamily. In terms of assembly, interacts with 100S ribosomes.

The protein resides in the cytoplasm. In terms of biological role, involved in 100S ribosome formation from 70S ribosomes; 100S ribosomes are probably translationally inactive. Ribosome hibernation may be used by the cell to decrease overall energy consumption under nutrient-limiting conditions. Unlike E.coli, 100S ribosomes are present from mid-exponential growth, peak during the transition from log to stationary phase and then decrease. This Listeria monocytogenes serotype 1/2a (strain 10403S) protein is Ribosome hibernation promotion factor.